Here is a 1031-residue protein sequence, read N- to C-terminus: Semaphorin-6A (1031 aa).

A signal peptide spans 1–18 (MRPAALLLCLTLLHCAGA). The Extracellular segment spans residues 19 to 649 (GFPEDSEPIS…KSNDQLVPVT (631 aa)). A Sema domain is found at 24–512 (SEPISISHGN…FSTCVIKVPL (489 aa)). N-linked (GlcNAc...) asparagine glycans are attached at residues Asn-33, Asn-49, and Asn-65. Intrachain disulfides connect Cys-107–Cys-117, Cys-135–Cys-144, Cys-258–Cys-369, and Cys-283–Cys-328. Asn-282 carries an N-linked (GlcNAc...) asparagine glycan. Asn-434 and Asn-461 each carry an N-linked (GlcNAc...) asparagine glycan. 4 disulfides stabilise this stretch: Cys-477-Cys-506, Cys-515-Cys-533, Cys-521-Cys-568, and Cys-525-Cys-542. Residues 650–670 (LLAIAVILAFVMGAVFSGIIV) traverse the membrane as a helical segment. Residues 671–1031 (YCVCDHRRKD…TSMKPNDACT (361 aa)) are Cytoplasmic-facing. Ser-698 carries the phosphoserine modification. Disordered regions lie at residues 754 to 777 (ALPT…SREW), 861 to 902 (SSKS…TGLS), and 914 to 1031 (GLEY…DACT). Over residues 921-931 (YPTNSLTRSHQ) the composition is skewed to polar residues. Positions 932 to 951 (TTTLKRNNTNSSNSSHLSRN) are enriched in low complexity. Residue Ser-953 is modified to Phosphoserine. 2 stretches are compositionally biased toward polar residues: residues 971–998 (QVHS…SLTR) and 1019–1031 (PLST…DACT).

It belongs to the semaphorin family. Active as a homodimer or oligomer. The SEMA6A homodimer interacts with a PLXNA2 homodimer, giving rise to a heterotetramer. Interacts with EVL. As to expression, particularly high levels in spinal cord, cerebellum, metencephalon, superior and inferior colliculus, diencephalon, olfactory bulb and eye.

The protein resides in the cell membrane. Cell surface receptor for PLXNA2 that plays an important role in cell-cell signaling. Required for normal granule cell migration in the developing cerebellum. Promotes reorganization of the actin cytoskeleton and plays an important role in axon guidance in the developing central nervous system. Can act as repulsive axon guidance cue. Has repulsive action towards migrating granular neurons. May play a role in channeling sympathetic axons into the sympathetic chains and controlling the temporal sequence of sympathetic target innervation. The chain is Semaphorin-6A (Sema6a) from Mus musculus (Mouse).